Here is a 445-residue protein sequence, read N- to C-terminus: CBL-interacting serine/threonine-protein kinase 5 (445 aa).

The 256-residue stretch at 12–267 (YEMGRLLGKG…IPAIMRTPWL (256 aa)) folds into the Protein kinase domain. ATP is bound by residues 18–26 (LGKGTFAKV) and lysine 41. The active-site Proton acceptor is aspartate 135. The activation loop stretch occupies residues 153-182 (DFGLSALPEQILQDGLLHTQCGTPAYVAPE). Residue serine 157 is modified to Phosphoserine. Threonine 171 carries the phosphothreonine modification. The NAF domain occupies 307 to 332 (ISPKFFNAFEFISSMSSGFDLSSLFE). The interval 336–366 (KVQSVFTSRSSATEVMEKIETVTKEMNMKVK) is PPI.

Belongs to the protein kinase superfamily. CAMK Ser/Thr protein kinase family. SNF1 subfamily. It depends on Mn(2+) as a cofactor.

It catalyses the reaction L-seryl-[protein] + ATP = O-phospho-L-seryl-[protein] + ADP + H(+). The enzyme catalyses L-threonyl-[protein] + ATP = O-phospho-L-threonyl-[protein] + ADP + H(+). Its function is as follows. CIPK serine-threonine protein kinases interact with CBL proteins. Binding of a CBL protein to the regulatory NAF domain of CIPK protein lead to the activation of the kinase in a calcium-dependent manner. The protein is CBL-interacting serine/threonine-protein kinase 5 (CIPK5) of Arabidopsis thaliana (Mouse-ear cress).